A 144-amino-acid chain; its full sequence is Probable DNA-directed RNA polymerases I and III subunit RPAC2 (144 aa).

Residues 14 to 47 (KVEAETMEVDEQPQETPQVDDEEDLNVPSKKKME) form a disordered region. Over residues 18–38 (ETMEVDEQPQETPQVDDEEDL) the composition is skewed to acidic residues.

It belongs to the archaeal Rpo11/eukaryotic RPB11/RPC19 RNA polymerase subunit family. In terms of assembly, component of the RNA polymerase I (Pol I) and RNA polymerase III (Pol III) complexes consisting of at least 13 and 17 subunits, respectively.

It localises to the nucleus. Its function is as follows. DNA-dependent RNA polymerase catalyzes the transcription of DNA into RNA using the four ribonucleoside triphosphates as substrates. Common core component of RNA polymerases I and III which synthesize ribosomal RNA precursors and small RNAs, such as 5S rRNA and tRNAs, respectively. In Caenorhabditis elegans, this protein is Probable DNA-directed RNA polymerases I and III subunit RPAC2 (rpac-19).